Reading from the N-terminus, the 345-residue chain is Beta-hexosaminidase (345 aa).

Substrate is bound by residues Asp60, Arg68, Arg132, and 162–163 (KH). His175 (proton donor/acceptor) is an active-site residue. Asp247 functions as the Nucleophile in the catalytic mechanism.

It belongs to the glycosyl hydrolase 3 family. NagZ subfamily.

The protein resides in the cytoplasm. It catalyses the reaction Hydrolysis of terminal non-reducing N-acetyl-D-hexosamine residues in N-acetyl-beta-D-hexosaminides.. The protein operates within cell wall biogenesis; peptidoglycan recycling. Its function is as follows. Plays a role in peptidoglycan recycling by cleaving the terminal beta-1,4-linked N-acetylglucosamine (GlcNAc) from peptide-linked peptidoglycan fragments, giving rise to free GlcNAc, anhydro-N-acetylmuramic acid and anhydro-N-acetylmuramic acid-linked peptides. The sequence is that of Beta-hexosaminidase from Actinobacillus pleuropneumoniae serotype 5b (strain L20).